The sequence spans 532 residues: Telomerase Cajal body protein 1 (532 aa).

The disordered stretch occupies residues 1–48 (MKTSEELRLAPDSLPSDLVPAPVLQASPADKNTDSEPVPPPCGGDDQL). Serine 27, serine 61, and serine 83 each carry phosphoserine. Positions 83–115 (SPRIEEQEVPENASLPVEETNRPELESGEAMEG) are disordered. WD repeat units follow at residues 151–190 (RSEN…YSES), 206–251 (EGDT…LRAS), 256–297 (NHLD…RDCE), 307–348 (GQSG…ALLG), 349–389 (GHQG…HLLW), and 395–434 (VTTN…SDCK). Threonine 474 is modified (phosphothreonine). At serine 476 the chain carries Phosphoserine. The disordered stretch occupies residues 505-532 (CGGGPDPSNPDEDQDEKGQGRTEAVGMS).

It belongs to the TCAB1 family. Component of the telomerase holoenzyme complex composed of one molecule of TERT, one molecule of WRAP53/TCAB1, two molecules of H/ACA ribonucleoprotein complex subunits DKC1, NOP10, NHP2 and GAR1, and a telomerase RNA template component (TERC). The telomerase holoenzyme complex is associated with TEP1, SMG6/EST1A and POT1. Interacts with the chaperonin-containing T-complex (TRiC) complex; which mediates the folding of WRAP53/TCAB1. Interacts with COIL. Interacts with SMN1. Interacts with RNF8. Interacts with histone H2AX. Phosphorylated at Ser-61 by ATM in response to DNA damage, promoting its interaction with histone H2AX and localization to sites of DNA double-strand breaks.

It is found in the nucleus. The protein resides in the cajal body. Its subcellular location is the chromosome. The protein localises to the telomere. In terms of biological role, RNA chaperone that plays a key role in telomere maintenance and RNA localization to Cajal bodies. Specifically recognizes and binds the Cajal body box (CAB box) present in both small Cajal body RNAs (scaRNAs) and telomerase RNA template component (TERC). Essential component of the telomerase holoenzyme complex, a ribonucleoprotein complex essential for the replication of chromosome termini that elongates telomeres in most eukaryotes. In the telomerase holoenzyme complex, required to stimulate the catalytic activity of the complex. Acts by specifically binding the CAB box of the TERC RNA and controlling the folding of the CR4/CR5 region of the TERC RNA, a critical step for telomerase activity. In addition, also controls telomerase holoenzyme complex localization to Cajal body. During S phase, required for delivery of TERC to telomeres during S phase and for telomerase activity. In addition to its role in telomere maintenance, also required for Cajal body formation, probably by mediating localization of scaRNAs to Cajal bodies. Also plays a role in DNA repair: phosphorylated by ATM in response to DNA damage and relocalizes to sites of DNA double-strand breaks to promote the repair of DNA double-strand breaks. Acts by recruiting the ubiquitin ligase RNF8 to DNA breaks and promote both homologous recombination (HR) and non-homologous end joining (NHEJ). This Rattus norvegicus (Rat) protein is Telomerase Cajal body protein 1.